The following is an 856-amino-acid chain: Villin-like protein (856 aa).

Gelsolin-like repeat units lie at residues arginine 22–glycine 74, valine 146–alanine 186, leucine 263–lysine 307, leucine 401–glutamate 450, threonine 521–glutamate 561, and leucine 624–alanine 665. Positions serine 762–leucine 796 are disordered. A compositionally biased stretch (low complexity) spans serine 776–threonine 791. Positions alanine 790–phenylalanine 856 constitute an HP domain.

It belongs to the villin/gelsolin family. As to expression, ubiquitously expressed in 16 tissues examined.

Functionally, possible tumor suppressor. This Homo sapiens (Human) protein is Villin-like protein (VILL).